The primary structure comprises 93 residues: Signal recognition particle 19 kDa protein (93 aa).

It belongs to the SRP19 family. As to quaternary structure, part of the signal recognition particle protein translocation system, which is composed of SRP and FtsY. Archaeal SRP consists of a 7S RNA molecule of 300 nucleotides and two protein subunits: SRP54 and SRP19.

It is found in the cytoplasm. Its function is as follows. Involved in targeting and insertion of nascent membrane proteins into the cytoplasmic membrane. Binds directly to 7S RNA and mediates binding of the 54 kDa subunit of the SRP. This Haloquadratum walsbyi (strain DSM 16790 / HBSQ001) protein is Signal recognition particle 19 kDa protein.